A 174-amino-acid polypeptide reads, in one-letter code: Chorion class CB protein M5H4 (174 aa).

The signal sequence occupies residues 1-20 (MTTIVVLICASALFVQLAFS). The left arm stretch occupies residues 21-71 (QCLGRDPVIGFGGAYGSGWGGYDAISPYDGLGYGVPYSAGFIGLSPSNLAA). Residues 72 to 142 (SCGGALAVNS…GDGAIGIVSE (71 aa)) are central domain. The tract at residues 143–174 (APIVAPASIGYGQWPVNAGYKGIGPCGCGGLY) is right arm.

It belongs to the chorion protein family.

Functionally, this protein is one of many from the eggshell of the silk moth. This Bombyx mori (Silk moth) protein is Chorion class CB protein M5H4.